A 283-amino-acid polypeptide reads, in one-letter code: Elongation factor Ts (283 aa).

The tract at residues 79–82 is involved in Mg(2+) ion dislocation from EF-Tu; it reads TDFV.

Belongs to the EF-Ts family.

Its subcellular location is the cytoplasm. Functionally, associates with the EF-Tu.GDP complex and induces the exchange of GDP to GTP. It remains bound to the aminoacyl-tRNA.EF-Tu.GTP complex up to the GTP hydrolysis stage on the ribosome. This is Elongation factor Ts from Shewanella denitrificans (strain OS217 / ATCC BAA-1090 / DSM 15013).